Consider the following 710-residue polypeptide: Forkhead box protein P2 (710 aa).

Over residues 1–28 the composition is skewed to polar residues; that stretch reads MMQESATETISNSSMNQNGMSTLSSQLD. Disordered stretches follow at residues 1–44 and 272–334; these read MMQE…SSEV and HSQE…TGAS. The segment covering 273 to 283 has biased composition (basic and acidic residues); that stretch reads SQEDNGIKHGG. Residues 287 to 300 show a composition bias toward low complexity; the sequence is TTNNSSSTTSSTTS. Residues 310–319 are compositionally biased toward polar residues; it reads SIVNGQSSVL. Residues 321–332 are compositionally biased toward basic and acidic residues; it reads ARRDSSSHEETG. The C2H2-type zinc-finger motif lies at 343–366; that stretch reads CKWPGCESICEDFGQFLKHLNNEH. The interval 383–404 is leucine-zipper; the sequence is VQQLEIQLSKERERLQAMMTHL. The CTBP1-binding stretch occupies residues 417-421; that stretch reads PLNLV. Over residues 433-454 the composition is skewed to low complexity; it reads TSPQSLPQTPTTPTAPVTPITQ. The tract at residues 433–460 is disordered; sequence TSPQSLPQTPTTPTAPVTPITQGPSVIT. Positions 499 to 589 form a DNA-binding region, fork-head; sequence RPPFTYATLI…SQKITGSPTL (91 aa). Disordered regions lie at residues 644–663 and 673–710; these read LDHIDSNGNSSPGCSPQPHI and VIAEDEDCPMSLVTTANHSPELEDDREIEEEPLSEDLE. The segment covering 694 to 710 has biased composition (acidic residues); that stretch reads LEDDREIEEEPLSEDLE.

Forms homodimers and heterodimers with FOXP1 and FOXP4. Dimerization is required for DNA-binding. Interacts with CTBP1. Interacts with FOXP1. Interacts with TBR1. Interacts with ZMYM2.

The protein localises to the nucleus. Its function is as follows. Transcriptional repressor that may play a role in the specification and differentiation of lung epithelium. May also play a role in developing neural, gastrointestinal and cardiovascular tissues. Can act with CTBP1 to synergistically repress transcription but CTPBP1 is not essential. Plays a role in synapse formation by regulating SRPX2 levels. This chain is Forkhead box protein P2 (Foxp2), found in Rattus norvegicus (Rat).